Consider the following 509-residue polypeptide: Fumarate hydratase, mitochondrial (509 aa).

The transit peptide at 1–43 (MYRSARSLHRFSASLSDLRAAQRSIKARNVCPAPGLRHQTVRM) directs the protein to the mitochondrion. Substrate is bound by residues 144-146 (SGT), 175-178 (HPND), 185-187 (SSN), and Thr233. His234 (proton donor/acceptor) is an active-site residue. The active site involves Ser364. Substrate-binding positions include Ser365 and 370-372 (KVN).

Belongs to the class-II fumarase/aspartase family. Fumarase subfamily. As to quaternary structure, homotetramer.

The protein localises to the mitochondrion. The protein resides in the cytoplasm. It localises to the cytosol. It is found in the nucleus. Its subcellular location is the chromosome. It carries out the reaction (S)-malate = fumarate + H2O. It functions in the pathway carbohydrate metabolism; tricarboxylic acid cycle; (S)-malate from fumarate: step 1/1. Its function is as follows. Catalyzes the reversible stereospecific interconversion of fumarate to L-malate. Experiments in other species have demonstrated that specific isoforms of this protein act in defined pathways and favor one direction over the other. In terms of biological role, catalyzes the hydration of fumarate to L-malate in the tricarboxylic acid (TCA) cycle to facilitate a transition step in the production of energy in the form of NADH. Catalyzes the dehydration of L-malate to fumarate. Fumarate metabolism in the cytosol plays a role during urea cycle and arginine metabolism; fumarate being a by-product of the urea cycle and amino-acid catabolism. Also plays a role in DNA repair by promoting non-homologous end-joining (NHEJ). In response to DNA damage translocates to the nucleus and accumulates at DNA double-strand breaks (DSBs): acts by catalyzing formation of fumarate. This is Fumarate hydratase, mitochondrial from Danio rerio (Zebrafish).